Reading from the N-terminus, the 223-residue chain is Probable glutathione S-transferase (223 aa).

Positions 2 to 81 (AEVKLLGFWY…YIDETFEGPS (80 aa)) constitute a GST N-terminal domain. Glutathione is bound by residues S12, K39, V53, and 65 to 66 (ES). Positions 86 to 212 (DPYDRALARF…ELLAFFRARF (127 aa)) constitute a GST C-terminal domain.

This sequence belongs to the GST superfamily. HSP26 family. In terms of tissue distribution, root tip-specific expression.

The enzyme catalyses RX + glutathione = an S-substituted glutathione + a halide anion + H(+). This Nicotiana tabacum (Common tobacco) protein is Probable glutathione S-transferase.